Reading from the N-terminus, the 288-residue chain is ATP phosphoribosyltransferase (288 aa).

This sequence belongs to the ATP phosphoribosyltransferase family. Long subfamily. Mg(2+) is required as a cofactor.

The protein resides in the cytoplasm. It carries out the reaction 1-(5-phospho-beta-D-ribosyl)-ATP + diphosphate = 5-phospho-alpha-D-ribose 1-diphosphate + ATP. It participates in amino-acid biosynthesis; L-histidine biosynthesis; L-histidine from 5-phospho-alpha-D-ribose 1-diphosphate: step 1/9. With respect to regulation, feedback inhibited by histidine. In terms of biological role, catalyzes the condensation of ATP and 5-phosphoribose 1-diphosphate to form N'-(5'-phosphoribosyl)-ATP (PR-ATP). Has a crucial role in the pathway because the rate of histidine biosynthesis seems to be controlled primarily by regulation of HisG enzymatic activity. The polypeptide is ATP phosphoribosyltransferase (Methanococcus maripaludis (strain C5 / ATCC BAA-1333)).